A 1578-amino-acid polypeptide reads, in one-letter code: Cilia- and flagella-associated protein 74 (1578 aa).

The span at Met1–Val14 shows a compositional bias: acidic residues. Disordered stretches follow at residues Met1 to Asp21 and Glu33 to Asp67. The span at Glu33–Thr65 shows a compositional bias: basic and acidic residues. 2 coiled-coil regions span residues Arg103–Ile156 and Lys330–His378.

It belongs to the CFAP74 family.

The protein resides in the cytoplasm. It localises to the cytoskeleton. It is found in the cilium axoneme. The protein localises to the flagellum axoneme. In terms of biological role, as part of the central apparatus of the cilium axoneme may play a role in cilium movement. May play an important role in sperm architecture and function. The sequence is that of Cilia- and flagella-associated protein 74 from Mus musculus (Mouse).